Reading from the N-terminus, the 92-residue chain is Small ribosomal subunit protein uS15c (92 aa).

This sequence belongs to the universal ribosomal protein uS15 family. Part of the 30S ribosomal subunit.

The protein resides in the plastid. It localises to the chloroplast. This chain is Small ribosomal subunit protein uS15c (rps15), found in Guizotia abyssinica (Niger).